Here is a 242-residue protein sequence, read N- to C-terminus: MTERFQQKNISVPDGIWIMRQTWNDVLFAHWPVDVSILRALVPSVLELDTYNGQAWISMLPFMLTNLRARYLPVIPGARAFPELNLRTYVTYKGKPGIYFFSLDADHRLAVLGARTFFHLPYFYADMKSEKNGDAIDYVSKRKNDKEAAFHAAYRPISAPFTAEKDSLDYWLTERYRLYTTYRNKLYYEDIHHHPWLLQNAEAEISVNTVTDAHGITLPESDPLLHYAKKQDVLFWPLRKWS.

This is an uncharacterized protein from Bacillus subtilis (strain 168).